A 135-amino-acid chain; its full sequence is Mediator of RNA polymerase II transcription subunit 10 (135 aa).

It belongs to the Mediator complex subunit 10 family. In terms of assembly, component of the Mediator complex.

The protein resides in the nucleus. Component of the Mediator complex, a coactivator involved in the regulated transcription of nearly all RNA polymerase II-dependent genes. Mediator functions as a bridge to convey information from gene-specific regulatory proteins to the basal RNA polymerase II transcription machinery. Mediator is recruited to promoters by direct interactions with regulatory proteins and serves as a scaffold for the assembly of a functional preinitiation complex with RNA polymerase II and the general transcription factors. In Xenopus laevis (African clawed frog), this protein is Mediator of RNA polymerase II transcription subunit 10 (med10).